Consider the following 444-residue polypeptide: Phosphoglucosamine mutase (444 aa).

Catalysis depends on Ser-101, which acts as the Phosphoserine intermediate. Ser-101, Asp-240, Asp-242, and Asp-244 together coordinate Mg(2+). Ser-101 is modified (phosphoserine).

The protein belongs to the phosphohexose mutase family. It depends on Mg(2+) as a cofactor. Activated by phosphorylation.

The enzyme catalyses alpha-D-glucosamine 1-phosphate = D-glucosamine 6-phosphate. In terms of biological role, catalyzes the conversion of glucosamine-6-phosphate to glucosamine-1-phosphate. The sequence is that of Phosphoglucosamine mutase from Sphingopyxis alaskensis (strain DSM 13593 / LMG 18877 / RB2256) (Sphingomonas alaskensis).